A 134-amino-acid chain; its full sequence is RxLR effector protein 4 (134 aa).

The first 22 residues, methionine 1–alanine 22, serve as a signal peptide directing secretion. The segment at alanine 43–glutamine 65 is disordered. Residues aspartate 48–aspartate 58 are compositionally biased toward basic and acidic residues. Residues arginine 52 to arginine 71 carry the RxLR-dEER motif.

Belongs to the RxLR effector family.

The protein localises to the secreted. Functionally, effector that enhances plant susceptibility to P.parasitica in Nicotiana benthamiana and Arabidopsis thaliana. Triggers non-specific cell death in a variety of plants, including tobacco, tomato, potato and A.thaliana. E4-induced cell death is dependent on HSP90, NPK and SGT1, suggesting that PpE4 is recognized by the plant immune system. In Phytophthora nicotianae (strain INRA-310) (Phytophthora parasitica), this protein is RxLR effector protein 4.